Reading from the N-terminus, the 156-residue chain is Rhombotin-1 (156 aa).

LIM zinc-binding domains follow at residues 22–84 (KGCA…LFGT) and 86–148 (GNCA…GHLN).

As to expression, expressed in the brain and not in the thymus.

Its subcellular location is the nucleus. In terms of biological role, may be involved in gene regulation within neural lineage cells potentially by direct DNA binding or by binding to other transcription factors. The protein is Rhombotin-1 (Lmo1) of Mus musculus (Mouse).